Reading from the N-terminus, the 270-residue chain is Thiazole synthase (270 aa).

The active-site Schiff-base intermediate with DXP is the Lys-112. Residues Gly-173, 199–200 (AG), and 221–222 (NS) each bind 1-deoxy-D-xylulose 5-phosphate.

The protein belongs to the ThiG family. In terms of assembly, homotetramer. Forms heterodimers with either ThiH or ThiS.

It localises to the cytoplasm. The enzyme catalyses [ThiS sulfur-carrier protein]-C-terminal-Gly-aminoethanethioate + 2-iminoacetate + 1-deoxy-D-xylulose 5-phosphate = [ThiS sulfur-carrier protein]-C-terminal Gly-Gly + 2-[(2R,5Z)-2-carboxy-4-methylthiazol-5(2H)-ylidene]ethyl phosphate + 2 H2O + H(+). It functions in the pathway cofactor biosynthesis; thiamine diphosphate biosynthesis. In terms of biological role, catalyzes the rearrangement of 1-deoxy-D-xylulose 5-phosphate (DXP) to produce the thiazole phosphate moiety of thiamine. Sulfur is provided by the thiocarboxylate moiety of the carrier protein ThiS. In vitro, sulfur can be provided by H(2)S. This is Thiazole synthase from Pseudomonas putida (strain ATCC 700007 / DSM 6899 / JCM 31910 / BCRC 17059 / LMG 24140 / F1).